The chain runs to 638 residues: Dihydrolipoyllysine-residue acetyltransferase component of pyruvate dehydrogenase complex (638 aa).

Lipoyl-binding domains lie at 2 to 74 and 117 to 191; these read SEII…IELE and SQEV…LTLR. Position 40 is an N6-lipoyllysine (Lys-40). The span at 90–117 shows a compositional bias: low complexity; it reads PAAPTQAVDEAEAPSPGASATPAPAAAS. A disordered region spans residues 90-119; that stretch reads PAAPTQAVDEAEAPSPGASATPAPAAASQE. The residue at position 157 (Lys-157) is an N6-lipoyllysine. Residues 201–220 form a disordered region; sequence APAAAAAASPAPAPLAPAAA. Residues 222-296 form the Lipoyl-binding 3 domain; that stretch reads PQEVKVPDIG…GTGDQILTLR (75 aa). Lys-262 carries the post-translational modification N6-lipoyllysine. The span at 301-320 shows a compositional bias: low complexity; the sequence is APSGPRARGSPGQAAAAPGA. Positions 301 to 336 are disordered; that stretch reads APSGPRARGSPGQAAAAPGAAPAPAPVGAPSRNGAK. The 38-residue stretch at 338–375 folds into the Peripheral subunit-binding (PSBD) domain; sequence HAGPAVRQLAREFGVELAAINSTGPRGRILKEDVQAYV. The segment at 382-638 is catalytic; it reads AKEAPAAGAA…LLADIRAILL (257 aa). The active site involves His-611.

Belongs to the 2-oxoacid dehydrogenase family. Forms a 24-polypeptide structural core with octahedral symmetry. Requires (R)-lipoate as cofactor.

The enzyme catalyses N(6)-[(R)-dihydrolipoyl]-L-lysyl-[protein] + acetyl-CoA = N(6)-[(R)-S(8)-acetyldihydrolipoyl]-L-lysyl-[protein] + CoA. Its function is as follows. The pyruvate dehydrogenase complex catalyzes the overall conversion of pyruvate to acetyl-CoA and CO(2). It contains multiple copies of three enzymatic components: pyruvate dehydrogenase (E1), dihydrolipoamide acetyltransferase (E2) and lipoamide dehydrogenase (E3). The chain is Dihydrolipoyllysine-residue acetyltransferase component of pyruvate dehydrogenase complex from Azotobacter vinelandii.